The sequence spans 424 residues: Kynureninase (424 aa).

Pyridoxal 5'-phosphate contacts are provided by residues L106, T107, 134–137 (FPSD), D219, H222, and Y244. Position 245 is an N6-(pyridoxal phosphate)lysine (K245). W274 and N302 together coordinate pyridoxal 5'-phosphate.

It belongs to the kynureninase family. As to quaternary structure, homodimer. The cofactor is pyridoxal 5'-phosphate.

It catalyses the reaction L-kynurenine + H2O = anthranilate + L-alanine + H(+). It carries out the reaction 3-hydroxy-L-kynurenine + H2O = 3-hydroxyanthranilate + L-alanine + H(+). It participates in amino-acid degradation; L-kynurenine degradation; L-alanine and anthranilate from L-kynurenine: step 1/1. It functions in the pathway cofactor biosynthesis; NAD(+) biosynthesis; quinolinate from L-kynurenine: step 2/3. Its function is as follows. Catalyzes the cleavage of L-kynurenine (L-Kyn) and L-3-hydroxykynurenine (L-3OHKyn) into anthranilic acid (AA) and 3-hydroxyanthranilic acid (3-OHAA), respectively. This chain is Kynureninase, found in Xanthomonas campestris pv. campestris (strain 8004).